We begin with the raw amino-acid sequence, 222 residues long: 3-demethoxyubiquinol 3-hydroxylase (222 aa).

6 residues coordinate Fe cation: Glu71, Glu101, His104, Glu153, Glu185, and His188.

This sequence belongs to the COQ7 family. Fe cation is required as a cofactor.

It localises to the cell membrane. The catalysed reaction is a 5-methoxy-2-methyl-3-(all-trans-polyprenyl)benzene-1,4-diol + AH2 + O2 = a 3-demethylubiquinol + A + H2O. Its pathway is cofactor biosynthesis; ubiquinone biosynthesis. Its function is as follows. Catalyzes the hydroxylation of 2-nonaprenyl-3-methyl-6-methoxy-1,4-benzoquinol during ubiquinone biosynthesis. This Bordetella pertussis (strain Tohama I / ATCC BAA-589 / NCTC 13251) protein is 3-demethoxyubiquinol 3-hydroxylase.